A 63-amino-acid chain; its full sequence is Large ribosomal subunit protein uL30 (63 aa).

This sequence belongs to the universal ribosomal protein uL30 family. In terms of assembly, part of the 50S ribosomal subunit.

The protein is Large ribosomal subunit protein uL30 of Rickettsia africae (strain ESF-5).